The following is an 88-amino-acid chain: Acyl-CoA-binding domain-containing protein 7 (88 aa).

In terms of domain architecture, ACB spans 3 to 88; the sequence is LQADFDRAAE…AKELIEKYGI (86 aa). Residues Arg15, 30–34, Lys56, and Tyr75 contribute to the an acyl-CoA site; that span reads YGLYK.

Belongs to the ACBD7 family.

Binds medium- and long-chain acyl-CoA esters. The polypeptide is Acyl-CoA-binding domain-containing protein 7 (ACBD7) (Homo sapiens (Human)).